A 327-amino-acid polypeptide reads, in one-letter code: Phenylalanine--tRNA ligase alpha subunit (327 aa).

Glu-252 is a binding site for Mg(2+).

The protein belongs to the class-II aminoacyl-tRNA synthetase family. Phe-tRNA synthetase alpha subunit type 1 subfamily. As to quaternary structure, tetramer of two alpha and two beta subunits. It depends on Mg(2+) as a cofactor.

Its subcellular location is the cytoplasm. It catalyses the reaction tRNA(Phe) + L-phenylalanine + ATP = L-phenylalanyl-tRNA(Phe) + AMP + diphosphate + H(+). In Erwinia tasmaniensis (strain DSM 17950 / CFBP 7177 / CIP 109463 / NCPPB 4357 / Et1/99), this protein is Phenylalanine--tRNA ligase alpha subunit.